The following is a 90-amino-acid chain: ATP synthase subunit e, mitochondrial (90 aa).

Residue serine 2 is modified to N-acetylserine. The helical transmembrane segment at valine 7–histidine 23 threads the bilayer.

As to quaternary structure, F-type ATP synthases have 2 components, the catalytic core F(1) and the membrane-embedded component F(0), linked together by a central stalk and a peripheral stalk. The central stalk, also called rotor shaft, is often seen as part of F(1). The peripheral stalk is seen as part of F(0). F(0) contains the membrane channel next to the rotor. F-type ATP synthases form dimers but each monomer functions independently in ATP generation. The dimer consists of 17 different polypeptides: ATP1 (subunit alpha, 3 molecules per monomer, part of F(1)), ATP2 (subunit beta, 3 copies per monomer, part of F(1)), ATP3 (subunit gamma, part of the central stalk), ATP4 (subunit b, part of the peripheral stalk), ATP5/OSCP (subunit 5/OSCP, part of the peripheral stalk), ATP6 (subunit a, part of the peripheral stalk), ATP7 (subunit d, part of the peripheral stalk), ATP8 (subunit 8, part of the peripheral stalk), OLI1 (subunit c, part of the rotor, 10 molecules per monomer), ATP14 (subunit h, part of the peripheral stalk), ATP15 (subunit epsilon, part of the central stalk), ATP16 (subunit delta, part of the central stalk), ATP17 (subunit f, part of the peripheral stalk), ATP18 (subunit i/j, part of the peripheral stalk), ATP19 (subunit k, dimer-specific, at interface between monomers), ATP20 (subunit g, at interface between monomers), TIM11 (subunit e, at interface between monomers).

The protein localises to the mitochondrion inner membrane. Its function is as follows. Mitochondrial membrane ATP synthase (F(1)F(0) ATP synthase or Complex V) produces ATP from ADP in the presence of a proton gradient across the membrane which is generated by electron transport complexes of the respiratory chain. F-type ATP synthases consist of two structural domains, F(1) - containing the extramembraneous catalytic core, and F(0) - containing the membrane proton channel, linked together by a central stalk and a peripheral stalk. During catalysis, ATP synthesis in the catalytic domain of F(1) is coupled via a rotary mechanism of the central stalk subunits to proton translocation. Part of the complex F(0) domain. Minor subunit located with subunit a/ATP6 in the membrane. Together with subunit g/ATP20, probably contributes to membrane curvature at the site of the ATP synthase dimer, ultimately contributing to formation of cristae. The protein is ATP synthase subunit e, mitochondrial of Yarrowia lipolytica (strain CLIB 122 / E 150) (Yeast).